The primary structure comprises 245 residues: MASSGNGTTAGTGSPCGACKFLRRKCASDCIFAPYFSSEQGAARFAAIHKVFGASNVSKLLLNVPIHDRCEAVVTIAYEAQARLHDPVYGCVSHIFALQQQVAFLQSQVMQMKAQIAGHQTSAAGDLRHSSESTNQFMTWQQTSVSPIGSAYSTPYNHHQPYYGHVNPNNPVSPQSSLEESFSNTSSDVTTTANVRETHHQTGGGVYGHDGIGFHEGYPNKKRSVSYCSSDLGELQALALRMMKN.

One can recognise an LOB domain in the interval Ser-14–Ile-116. A disordered region spans residues Tyr-162 to Ser-183.

This sequence belongs to the LOB domain-containing protein family. In terms of assembly, homodimer and heterodimer with LBD18. Expressed in roots and faintly in shoots.

It localises to the nucleus. In terms of biological role, transcriptional activator. Involved in lateral root formation. Regulated by the transcriptional activators ARF7 and ARF19. Functions in the initiation and emergence of lateral roots, in conjunction with LBD18, downstream of ARF7 and ARF19. Acts downstream of the auxin influx carriers AUX1 and LAX1 in the regulation of lateral root initiation and development. This chain is LOB domain-containing protein 16 (LBD16), found in Arabidopsis thaliana (Mouse-ear cress).